A 166-amino-acid polypeptide reads, in one-letter code: PTS system glucose-specific EIIA component (166 aa).

The PTS EIIA type-1 domain maps to 36–140 (DVVFSEKIVG…SVLTPIVISN (105 aa)). Zn(2+) is bound by residues His-73 and His-88. His-88 serves as the catalytic Tele-phosphohistidine intermediate; for EIIA activity. His-88 is modified (phosphohistidine; by HPr).

Heterodimer with glycerol kinase (glpk). Zn(2+) serves as cofactor.

It is found in the cytoplasm. Functionally, the phosphoenolpyruvate-dependent sugar phosphotransferase system (sugar PTS), a major carbohydrate active transport system, catalyzes the phosphorylation of incoming sugar substrates concomitantly with their translocation across the cell membrane. The enzyme II complex composed of PtsG and Crr is involved in glucose transport. The protein is PTS system glucose-specific EIIA component (crr) of Haemophilus influenzae (strain ATCC 51907 / DSM 11121 / KW20 / Rd).